The following is a 213-amino-acid chain: GTP-binding protein yptV4 (213 aa).

Position 13–21 (13–21 (GDTGVGKSC)) interacts with GTP. The Effector region signature appears at 35-43 (HDLTIGVEF). GTP contacts are provided by residues 61 to 65 (DTAGQ), 119 to 122 (NKCD), and 149 to 151 (SAR). The tract at residues 194–213 (AGPQAAKPGEGDARKSSSCC) is disordered. Positions 202–213 (GEGDARKSSSCC) are enriched in basic and acidic residues. Residues C212 and C213 are each lipidated (S-geranylgeranyl cysteine).

Belongs to the small GTPase superfamily. Rab family.

Its subcellular location is the cell membrane. Functionally, protein transport. Probably involved in vesicular traffic. In Volvox carteri (Green alga), this protein is GTP-binding protein yptV4 (YPTV4).